Here is a 928-residue protein sequence, read N- to C-terminus: MKTSIPWVLVSSVLAFSCHLQSLANEELLSPDDSFNGNIDSGTFTPKTSATTYSLTGDVFFYEPGKGTPLSDSCFKQTTDNLTFLGNGHSLTFGFIDAGTHAGAAASTTANKNLTFSGFSLLSFDSSPSTTVTTGQGTLSSAGGVNLENIRKLVVAGNFSTADGGAIKGASFLLTGTSGDALFSNNSSSTKGGAIATTAGARIANNTGYVRFLSNIASTSGGAIDDEGTSILSNNKFLYFEGNAAKTTGGAICNTKASGSPELIISNNKTLIFASNVAETSGGAIHAKKLALSSGGFTEFLRNNVSSATPKGGAISIDASGELSLSAETGNITFVRNTLTTTGSTDTPKRNAINIGSNGKFTELRAAKNHTIFFYDPITSEGTSSDVLKINNGSAGALNPYQGTILFSGETLTADELKVADNLKSSFTQPVSLSGGKLLLQKGVTLESTSFSQEAGSLLGMDSGTTLSTTAGSITITNLGINVDSLGLKQPVSLTAKGASNKVIVSGKLNLIDIEGNIYESHMFSHDQLFSLLKITVDADVDTNVDISSLIPVPAEDPNSEYGFQGQWNVNWTTDTATNTKEATATWTKTGFVPSPERKSALVCNTLWGVFTDIRSLQQLVEIGATGMEHKQGFWVSSMTNFLHKTGDENRKGFRHTSGGYVIGGSAHTPKDDLFTFAFCHLFARDKDCFIAHNNSRTYGGTLFFKHSHTLQPQNYLRLGRAKFSESAIEKFPREIPLALDVQVSFSHSDNRMETHYTSLPESEGSWSNECIAGGIGLDLPFVLSNPHPLFKTFIPQMKVEMVYVSQNSFFESSSDGRGFSIGRLLNLSIPVGAKFVQGDIGDSYTYDLSGFFVSDVYRNNPQSTATLVMSPDSWKIRGGNLSRQAFLLRGSNNYVYNSNCELFGHYAMELRGSSRNYNVDVGTKLRF.

An N-terminal signal peptide occupies residues 1–24 (MKTSIPWVLVSSVLAFSCHLQSLA). The region spanning 627–928 (GMEHKQGFWV…NVDVGTKLRF (302 aa)) is the Autotransporter domain.

Belongs to the PMP outer membrane protein family.

It is found in the secreted. It localises to the cell wall. The protein resides in the cell outer membrane. This chain is Probable outer membrane protein pmp11 (pmp11), found in Chlamydia pneumoniae (Chlamydophila pneumoniae).